Reading from the N-terminus, the 353-residue chain is Photosystem II D2 protein (353 aa).

N-acetylthreonine is present on T2. A Phosphothreonine modification is found at T2. A helical membrane pass occupies residues 41–61; that stretch reads CAYFALGGWLTGTTFVTSWYT. H118 lines the chlorophyll a pocket. Residues 125–141 traverse the membrane as a helical segment; that stretch reads GFMLRQFELARSVQLRP. Residues Q130 and N143 each contribute to the pheophytin a site. Residues 153–166 traverse the membrane as a helical segment; that stretch reads VFVSVFLIYPLGQS. H198 is a binding site for chlorophyll a. The chain crosses the membrane as a helical span at residues 208–228; sequence AALLCAIHGATVENTLFEDGD. A plastoquinone is bound by residues H215 and F262. H215 is a binding site for Fe cation. Residue H269 participates in Fe cation binding. A helical membrane pass occupies residues 279–295; that stretch reads GLWMSAIGVVGLALNLR.

The protein belongs to the reaction center PufL/M/PsbA/D family. PSII is composed of 1 copy each of membrane proteins PsbA, PsbB, PsbC, PsbD, PsbE, PsbF, PsbH, PsbI, PsbJ, PsbK, PsbL, PsbM, PsbT, PsbX, PsbY, PsbZ, Psb30/Ycf12, at least 3 peripheral proteins of the oxygen-evolving complex and a large number of cofactors. It forms dimeric complexes. The D1/D2 heterodimer binds P680, chlorophylls that are the primary electron donor of PSII, and subsequent electron acceptors. It shares a non-heme iron and each subunit binds pheophytin, quinone, additional chlorophylls, carotenoids and lipids. There is also a Cl(-1) ion associated with D1 and D2, which is required for oxygen evolution. The PSII complex binds additional chlorophylls, carotenoids and specific lipids. serves as cofactor.

The protein localises to the plastid. The protein resides in the chloroplast thylakoid membrane. It carries out the reaction 2 a plastoquinone + 4 hnu + 2 H2O = 2 a plastoquinol + O2. Functionally, photosystem II (PSII) is a light-driven water:plastoquinone oxidoreductase that uses light energy to abstract electrons from H(2)O, generating O(2) and a proton gradient subsequently used for ATP formation. It consists of a core antenna complex that captures photons, and an electron transfer chain that converts photonic excitation into a charge separation. The D1/D2 (PsbA/PsbD) reaction center heterodimer binds P680, the primary electron donor of PSII as well as several subsequent electron acceptors. D2 is needed for assembly of a stable PSII complex. The chain is Photosystem II D2 protein from Zygnema circumcarinatum (Green alga).